We begin with the raw amino-acid sequence, 270 residues long: Tryptophan synthase alpha chain (270 aa).

Residues Glu49 and Asp60 each act as proton acceptor in the active site.

The protein belongs to the TrpA family. As to quaternary structure, tetramer of two alpha and two beta chains.

The catalysed reaction is (1S,2R)-1-C-(indol-3-yl)glycerol 3-phosphate + L-serine = D-glyceraldehyde 3-phosphate + L-tryptophan + H2O. Its pathway is amino-acid biosynthesis; L-tryptophan biosynthesis; L-tryptophan from chorismate: step 5/5. Its function is as follows. The alpha subunit is responsible for the aldol cleavage of indoleglycerol phosphate to indole and glyceraldehyde 3-phosphate. This Thermobifida fusca (strain YX) protein is Tryptophan synthase alpha chain.